Here is a 187-residue protein sequence, read N- to C-terminus: Ribosome-recycling factor (187 aa).

Belongs to the RRF family.

The protein localises to the cytoplasm. In terms of biological role, responsible for the release of ribosomes from messenger RNA at the termination of protein biosynthesis. May increase the efficiency of translation by recycling ribosomes from one round of translation to another. This is Ribosome-recycling factor from Methylorubrum populi (strain ATCC BAA-705 / NCIMB 13946 / BJ001) (Methylobacterium populi).